The primary structure comprises 220 residues: Deoxyribose-phosphate aldolase (220 aa).

Asp-89 acts as the Proton donor/acceptor in catalysis. The Schiff-base intermediate with acetaldehyde role is filled by Lys-151. Lys-180 functions as the Proton donor/acceptor in the catalytic mechanism.

It belongs to the DeoC/FbaB aldolase family. DeoC type 1 subfamily.

The protein localises to the cytoplasm. The catalysed reaction is 2-deoxy-D-ribose 5-phosphate = D-glyceraldehyde 3-phosphate + acetaldehyde. It participates in carbohydrate degradation; 2-deoxy-D-ribose 1-phosphate degradation; D-glyceraldehyde 3-phosphate and acetaldehyde from 2-deoxy-alpha-D-ribose 1-phosphate: step 2/2. Functionally, catalyzes a reversible aldol reaction between acetaldehyde and D-glyceraldehyde 3-phosphate to generate 2-deoxy-D-ribose 5-phosphate. The protein is Deoxyribose-phosphate aldolase of Staphylococcus haemolyticus (strain JCSC1435).